A 236-amino-acid chain; its full sequence is 2-C-methyl-D-erythritol 4-phosphate cytidylyltransferase (236 aa).

It belongs to the IspD/TarI cytidylyltransferase family. IspD subfamily. As to quaternary structure, homodimer.

The enzyme catalyses 2-C-methyl-D-erythritol 4-phosphate + CTP + H(+) = 4-CDP-2-C-methyl-D-erythritol + diphosphate. It participates in isoprenoid biosynthesis; isopentenyl diphosphate biosynthesis via DXP pathway; isopentenyl diphosphate from 1-deoxy-D-xylulose 5-phosphate: step 2/6. Catalyzes the formation of 4-diphosphocytidyl-2-C-methyl-D-erythritol from CTP and 2-C-methyl-D-erythritol 4-phosphate (MEP). This is 2-C-methyl-D-erythritol 4-phosphate cytidylyltransferase from Buchnera aphidicola subsp. Schizaphis graminum (strain Sg).